The primary structure comprises 855 residues: DNA mismatch repair protein MutS (855 aa).

ATP is bound at residue 613 to 620 (GPNMGGKS). Residues 796–817 (TTSLPHEQPRAKPGKPAIPQQS) form a disordered region.

The protein belongs to the DNA mismatch repair MutS family.

Its function is as follows. This protein is involved in the repair of mismatches in DNA. It is possible that it carries out the mismatch recognition step. This protein has a weak ATPase activity. This chain is DNA mismatch repair protein MutS, found in Pseudomonas syringae pv. tomato (strain ATCC BAA-871 / DC3000).